A 91-amino-acid chain; its full sequence is Large ribosomal subunit protein eL43 (91 aa).

A C4-type zinc finger spans residues 39-60; it reads CSFCGKDAVRRSSVGIWKCNGC.

Belongs to the eukaryotic ribosomal protein eL43 family.

The sequence is that of Large ribosomal subunit protein eL43 (rpl37A) from Dictyostelium discoideum (Social amoeba).